Consider the following 118-residue polypeptide: DNA mimic protein DMP12 (118 aa).

It belongs to the DMP12-like protein family. As to quaternary structure, monomer. Interacts with the dimeric form of the DNA-binding protein HU.

Acts as a DNA mimic. Interacts with the DNA-binding protein HU and partially prevents the binding of HU protein to DNA by occupying the DNA binding sites on the protein. However, the relatively weak affinity of DMP12 for HU suggests that it may not completely block the HU protein-DNA binding, and that DMP12 is more likely to act as a regulator than a competitive inhibitor. It protects HU protein from limited digestion by trypsin in a limited trypsin digestion assay, suggesting that it may serve to protect the HU protein and improve the stability of unbound HU protein. The protein is DNA mimic protein DMP12 of Neisseria meningitidis serogroup B (strain ATCC BAA-335 / MC58).